A 207-amino-acid polypeptide reads, in one-letter code: ATP-dependent Clp protease proteolytic subunit (207 aa).

A propeptide spanning residues 1 to 14 is cleaved from the precursor; it reads MSYSGERDNLAPHM. Ser111 functions as the Nucleophile in the catalytic mechanism. His136 is a catalytic residue.

This sequence belongs to the peptidase S14 family. As to quaternary structure, fourteen ClpP subunits assemble into 2 heptameric rings which stack back to back to give a disk-like structure with a central cavity, resembling the structure of eukaryotic proteasomes. Component of the ClpAP and ClpXP complexes.

It localises to the cytoplasm. The enzyme catalyses Hydrolysis of proteins to small peptides in the presence of ATP and magnesium. alpha-casein is the usual test substrate. In the absence of ATP, only oligopeptides shorter than five residues are hydrolyzed (such as succinyl-Leu-Tyr-|-NHMec, and Leu-Tyr-Leu-|-Tyr-Trp, in which cleavage of the -Tyr-|-Leu- and -Tyr-|-Trp bonds also occurs).. In terms of biological role, cleaves peptides in various proteins in a process that requires ATP hydrolysis. Has a chymotrypsin-like activity. Plays a major role in the degradation of misfolded proteins. The protein is ATP-dependent Clp protease proteolytic subunit of Salmonella paratyphi A (strain ATCC 9150 / SARB42).